The sequence spans 353 residues: Photosystem II protein D1 (353 aa).

Residue threonine 2 is modified to N-acetylthreonine. Threonine 2 carries the phosphothreonine modification. The next 3 helical transmembrane spans lie at 29 to 46 (YIGW…TATS), 118 to 133 (HFLL…EWEL), and 142 to 156 (WIAV…AATA). Histidine 118 provides a ligand contact to chlorophyll a. Tyrosine 126 serves as a coordination point for pheophytin a. [CaMn4O5] cluster-binding residues include aspartate 170 and glutamate 189. A helical transmembrane segment spans residues 197 to 218 (FHMLGVAGVFGGSLFSAMHGSL). Residue histidine 198 participates in chlorophyll a binding. A quinone contacts are provided by residues histidine 215 and 264–265 (SF). Fe cation is bound at residue histidine 215. Histidine 272 is a binding site for Fe cation. Residues 274–288 (FLAAWPVAGIWFTAL) traverse the membrane as a helical segment. Residues histidine 332, glutamate 333, aspartate 342, and alanine 344 each coordinate [CaMn4O5] cluster. A propeptide spanning residues 345-353 (AVESISIGG) is cleaved from the precursor.

The protein belongs to the reaction center PufL/M/PsbA/D family. PSII is composed of 1 copy each of membrane proteins PsbA, PsbB, PsbC, PsbD, PsbE, PsbF, PsbH, PsbI, PsbJ, PsbK, PsbL, PsbM, PsbT, PsbX, PsbY, PsbZ, Psb30/Ycf12, at least 3 peripheral proteins of the oxygen-evolving complex and a large number of cofactors. It forms dimeric complexes. Requires The D1/D2 heterodimer binds P680, chlorophylls that are the primary electron donor of PSII, and subsequent electron acceptors. It shares a non-heme iron and each subunit binds pheophytin, quinone, additional chlorophylls, carotenoids and lipids. D1 provides most of the ligands for the Mn4-Ca-O5 cluster of the oxygen-evolving complex (OEC). There is also a Cl(-1) ion associated with D1 and D2, which is required for oxygen evolution. The PSII complex binds additional chlorophylls, carotenoids and specific lipids. as cofactor. In terms of processing, tyr-161 forms a radical intermediate that is referred to as redox-active TyrZ, YZ or Y-Z. Post-translationally, C-terminally processed by CTPA; processing is essential to allow assembly of the oxygen-evolving complex and thus photosynthetic growth.

It is found in the plastid. Its subcellular location is the chloroplast thylakoid membrane. It catalyses the reaction 2 a plastoquinone + 4 hnu + 2 H2O = 2 a plastoquinol + O2. Photosystem II (PSII) is a light-driven water:plastoquinone oxidoreductase that uses light energy to abstract electrons from H(2)O, generating O(2) and a proton gradient subsequently used for ATP formation. It consists of a core antenna complex that captures photons, and an electron transfer chain that converts photonic excitation into a charge separation. The D1/D2 (PsbA/PsbD) reaction center heterodimer binds P680, the primary electron donor of PSII as well as several subsequent electron acceptors. This Pinus contorta (Shore pine) protein is Photosystem II protein D1.